Reading from the N-terminus, the 273-residue chain is 3-methyl-2-oxobutanoate hydroxymethyltransferase (273 aa).

The Mg(2+) site is built by D53 and D92. Residues 53 to 54 (DS), D92, and K122 each bind 3-methyl-2-oxobutanoate. Mg(2+) is bound at residue E124. The active-site Proton acceptor is E191.

The protein belongs to the PanB family. In terms of assembly, homodecamer; pentamer of dimers. Mg(2+) serves as cofactor.

The protein localises to the cytoplasm. The enzyme catalyses 3-methyl-2-oxobutanoate + (6R)-5,10-methylene-5,6,7,8-tetrahydrofolate + H2O = 2-dehydropantoate + (6S)-5,6,7,8-tetrahydrofolate. The protein operates within cofactor biosynthesis; (R)-pantothenate biosynthesis; (R)-pantoate from 3-methyl-2-oxobutanoate: step 1/2. In terms of biological role, catalyzes the reversible reaction in which hydroxymethyl group from 5,10-methylenetetrahydrofolate is transferred onto alpha-ketoisovalerate to form ketopantoate. This chain is 3-methyl-2-oxobutanoate hydroxymethyltransferase, found in Bacteroides fragilis (strain ATCC 25285 / DSM 2151 / CCUG 4856 / JCM 11019 / LMG 10263 / NCTC 9343 / Onslow / VPI 2553 / EN-2).